The primary structure comprises 550 residues: Palmdelphin (550 aa).

Position 1 is an N-acetylmethionine (Met1). Residues 2–106 are a coiled coil; sequence EEAELVKERL…LQISTNEEAI (105 aa). Lys125 is covalently cross-linked (Glycyl lysine isopeptide (Lys-Gly) (interchain with G-Cter in SUMO2)). Ser135 is modified (phosphoserine). Lys179 is covalently cross-linked (Glycyl lysine isopeptide (Lys-Gly) (interchain with G-Cter in SUMO1); alternate). Lys179 participates in a covalent cross-link: Glycyl lysine isopeptide (Lys-Gly) (interchain with G-Cter in SUMO2); alternate. A compositionally biased stretch (basic and acidic residues) spans 248-259; it reads ERNSKSPTEYHE. The tract at residues 248–280 is disordered; the sequence is ERNSKSPTEYHEPVYANPFCRPTTPQREKVTPG. Thr271 bears the Phosphothreonine mark. Phosphoserine occurs at positions 321, 370, 384, and 385. Disordered regions lie at residues 356–393 and 463–528; these read VMQD…EDEK and HPIA…IAGD. The segment covering 483–494 has biased composition (basic and acidic residues); it reads KRAEVNPHENTN. Ser497, Ser514, and Ser519 each carry phosphoserine.

This sequence belongs to the paralemmin family. As to quaternary structure, interacts with GLUL. In terms of processing, phosphorylated.

It localises to the cytoplasm. Its subcellular location is the cell projection. The protein localises to the dendrite. It is found in the dendritic spine. This chain is Palmdelphin (PALMD), found in Bos taurus (Bovine).